A 2238-amino-acid chain; its full sequence is Protein Ycf2 (2238 aa).

1579–1586 (GSIGTGRS) provides a ligand contact to ATP.

This sequence belongs to the Ycf2 family.

It is found in the plastid. Probable ATPase of unknown function. Its presence in a non-photosynthetic plant (Epifagus virginiana) and experiments in tobacco indicate that it has an essential function which is probably not related to photosynthesis. In Cuscuta exaltata (Tall dodder), this protein is Protein Ycf2.